The following is a 39-amino-acid chain: Cytochrome b6-f complex subunit 5 (39 aa).

Residues 5–25 (LLCGIVLGLVPITLLGLFVSA) traverse the membrane as a helical segment.

The protein belongs to the PetG family. The 4 large subunits of the cytochrome b6-f complex are cytochrome b6, subunit IV (17 kDa polypeptide, PetD), cytochrome f and the Rieske protein, while the 4 small subunits are PetG, PetL, PetM and PetN. The complex functions as a dimer.

It is found in the cellular thylakoid membrane. Component of the cytochrome b6-f complex, which mediates electron transfer between photosystem II (PSII) and photosystem I (PSI), cyclic electron flow around PSI, and state transitions. PetG is required for either the stability or assembly of the cytochrome b6-f complex. This Prochlorococcus marinus (strain MIT 9515) protein is Cytochrome b6-f complex subunit 5.